A 368-amino-acid polypeptide reads, in one-letter code: Alanine racemase 3 (368 aa).

Lysine 42 functions as the Proton acceptor; specific for D-alanine in the catalytic mechanism. The residue at position 42 (lysine 42) is an N6-(pyridoxal phosphate)lysine. Arginine 141 is a substrate binding site. The Proton acceptor; specific for L-alanine role is filled by tyrosine 262. Substrate is bound at residue methionine 310.

It belongs to the alanine racemase family. It depends on pyridoxal 5'-phosphate as a cofactor.

It carries out the reaction L-alanine = D-alanine. It participates in amino-acid biosynthesis; D-alanine biosynthesis; D-alanine from L-alanine: step 1/1. Functionally, catalyzes the interconversion of L-alanine and D-alanine. May also act on other amino acids. The polypeptide is Alanine racemase 3 (alr3) (Salmonella typhi).